A 130-amino-acid polypeptide reads, in one-letter code: Small ribosomal subunit protein uS8 (130 aa).

Belongs to the universal ribosomal protein uS8 family. As to quaternary structure, part of the 30S ribosomal subunit. Contacts proteins S5 and S12.

Functionally, one of the primary rRNA binding proteins, it binds directly to 16S rRNA central domain where it helps coordinate assembly of the platform of the 30S subunit. The polypeptide is Small ribosomal subunit protein uS8 (Shewanella sp. (strain MR-7)).